We begin with the raw amino-acid sequence, 182 residues long: NADH-quinone oxidoreductase subunit I (182 aa).

2 consecutive 4Fe-4S ferredoxin-type domains span residues Leu-52–Ala-82 and Asp-92–Asp-121. [4Fe-4S] cluster contacts are provided by Cys-62, Cys-65, Cys-68, Cys-72, Cys-101, Cys-104, Cys-107, and Cys-111.

Belongs to the complex I 23 kDa subunit family. In terms of assembly, NDH-1 is composed of 13 different subunits. Subunits NuoA, H, J, K, L, M, N constitute the membrane sector of the complex. It depends on [4Fe-4S] cluster as a cofactor.

The protein localises to the cell inner membrane. It catalyses the reaction a quinone + NADH + 5 H(+)(in) = a quinol + NAD(+) + 4 H(+)(out). NDH-1 shuttles electrons from NADH, via FMN and iron-sulfur (Fe-S) centers, to quinones in the respiratory chain. The immediate electron acceptor for the enzyme in this species is believed to be ubiquinone. Couples the redox reaction to proton translocation (for every two electrons transferred, four hydrogen ions are translocated across the cytoplasmic membrane), and thus conserves the redox energy in a proton gradient. This chain is NADH-quinone oxidoreductase subunit I, found in Pseudomonas fluorescens (strain ATCC BAA-477 / NRRL B-23932 / Pf-5).